The primary structure comprises 910 residues: Auxilin (910 aa).

A run of 3 repeats spans residues N33–D36, N37–D40, and T41–D44. The 3 X 4 AA approximate tandem repeats stretch occupies residues N33–D44. The Phosphatase tensin-type domain maps to S52–K219. At S109 the chain carries Phosphoserine. The active-site Phosphocysteine intermediate is C161. The C2 tensin-type domain occupies F225 to Q363. Residues P406–P414 carry the SH3-binding motif. The tract at residues Q448–G772 is disordered. 4 positions are modified to phosphoserine: S450, S453, S560, and S567. Over residues P547–T569 the composition is skewed to low complexity. A compositionally biased stretch (polar residues) spans F596 to V626. The span at S651–H666 shows a compositional bias: low complexity. Residues M715–Y725 show a composition bias toward gly residues. Polar residues predominate over residues S732 to G758. The J domain occupies T846 to Y910.

Forms a complex composed of HSPA8, CLTC and DNAJC6. Interacts with HSPA8/HSC70 in an ATP-dependent manner; this interaction stimulates the HSPA8's ATPase activity. Interacts with CLTC; this interaction produces a local change in heavy-chain contacts, creating a detectable global distortion of the clathrin coat. Interacts with AP2A2. Interacts with DNM1(GTP-bound form); this interaction allows clathrin-coated vesicle (CCV) formation at the plasma membrane. In terms of processing, the N-terminus is blocked. Post-translationally, phosphorylation at Ser-567 modulates its ability to bind CLTC and therefore the synaptic vesicle endocytosis (SVE). In terms of tissue distribution, brain.

Its subcellular location is the cytoplasmic vesicle. The protein localises to the clathrin-coated vesicle. Its function is as follows. May act as a protein phosphatase and/or a lipid phosphatase. Co-chaperone that recruits HSPA8/HSC70 to clathrin-coated vesicles (CCVs) and promotes the ATP-dependent dissociation of clathrin from CCVs and participates in clathrin-mediated endocytosis of synaptic vesicles and their recycling and also in intracellular trafficking. Firstly, binds tightly to the clathrin cages, at a ratio of one DNAJC6 per clathrin triskelion. The HSPA8:ATP complex then binds to the clathrin-auxilin cage, initially at a ratio of one HSPA8 per triskelion leading to ATP hydrolysis stimulation and causing a conformational change in the HSPA8. This cycle is repeated three times to drive to a complex containing the clathrin-auxilin cage associated to three HSPA8:ADP complex. The ATP hydrolysis of the third HSPA8:ATP complex leads to a concerted dismantling of the cage into component triskelia. Then, dissociates from the released triskelia and be recycled to initiate another cycle of HSPA8's recruitment. Also acts during the early steps of clathrin-coated vesicle (CCV) formation through its interaction with the GTP bound form of DNM1. The protein is Auxilin of Bos taurus (Bovine).